The sequence spans 534 residues: Cytochrome P450 monooxygenase ascG (534 aa).

The chain crosses the membrane as a helical span at residues 13–33 (FVASFPALSAAAGLIVAISFI). N-linked (GlcNAc...) asparagine glycosylation occurs at Asn-466. Cys-469 contributes to the heme binding site.

This sequence belongs to the cytochrome P450 family. It depends on heme as a cofactor.

It localises to the membrane. It carries out the reaction ilicicolin C + NADPH + O2 + H(+) = ascochlorin + NADP(+) + 2 H2O. It participates in secondary metabolite biosynthesis; terpenoid biosynthesis. Cytochrome P450 monooxygenase; part of the asc-1 gene cluster that mediates the biosynthesis of both ascochlorin and ascofuranone, a strong inhibitor of cyanide-insensitive alternative oxidases and a promising drug candidate against African trypanosomiasis. The first step in the pathway is performed by the non-reducing polyketide synthase ascC that produces orsellinic acid by condensing acetyl-CoA with 3 malonyl-CoA units. Orsellinic acid is then prenylated by the prenyltransferase ascA to yield ilicicolinic acid B. Ilicicolinic acid B is further reduced to ilicicolin B by the reductase ascB. The halogenase ascD then chlorinates ilicicolin B to produce ilicicolin A which is converted to ilicicolin A epoxide by the cytochrome P450 monooxygenase ascE that catalyzes stereoselective epoxidation of the terminal double bond of the prenyl group. Ilicicolin A epoxide is the last common precursor for the biosynthesis of ascofuranone and ascochlorin. The terpene cyclase ascF produces a monocyclic terpene, and the cyclization reaction is proposed to be initiated by protonation of the terminal epoxide of ilicicolin A epoxide to generate a monocyclic tertiarycation, which is followed by a series of hydride and methyl shifts with abstraction of proton, leading to the formation of the (14S,15R,19R)-trimethylcyclohexanone ring structure of ilicicolin C, which is finally reduced to ascochlorin by the dehydrogenase ascG. On the other hand, ilicicolin A epoxide is hydroxylated by the cytochrome P450 monooxygenase ascH, and the resultant product is cyclized by the terpene cyclase ascI to ascofuranol via protonation-initiated epoxide ring opening, which facilitates the 6-endo-tet cyclization to form the tetrahy-drofuran ring. Finally, ascofuranol is oxidized into ascofuranone by ascJ. This chain is Cytochrome P450 monooxygenase ascG, found in Acremonium egyptiacum (Oospora egyptiaca).